The chain runs to 93 residues: Protein VNG_0358C (93 aa).

In Halobacterium salinarum (strain ATCC 700922 / JCM 11081 / NRC-1) (Halobacterium halobium), this protein is Protein VNG_0358C.